We begin with the raw amino-acid sequence, 61 residues long: Alpha-conotoxin-like Lp1.6a (61 aa).

The signal sequence occupies residues 1–21; it reads MGMRMMFIIFLFVVLATTVVS. A propeptide spanning residues 22-44 is cleaved from the precursor; it reads FTSGRASDGRNAPANNKVSDLIR. At Gln45 the chain carries Pyrrolidone carboxylic acid. 2 cysteine pairs are disulfide-bonded: Cys47/Cys53 and Cys48/Cys60. Cys60 carries the cysteine amide modification.

This sequence belongs to the conotoxin A superfamily. In terms of tissue distribution, expressed by the venom duct.

It localises to the secreted. Its function is as follows. Alpha-conotoxins act on postsynaptic membranes, they bind to the nicotinic acetylcholine receptors (nAChR) and thus inhibit them. The protein is Alpha-conotoxin-like Lp1.6a of Conus leopardus (Leopard cone).